A 205-amino-acid polypeptide reads, in one-letter code: Putative protein phosphatase inhibitor 2-like protein 1 (205 aa).

4 disordered regions span residues 1–44 (MAAS…SKKS), 64–92 (GLMKIDEPSTPYHSTMGDDEDACSDTETT), 107–148 (AEGL…TLHY), and 171–205 (VEEMLETAHGESMNTEESNQGSTASDQQQNKSRSS). Required for binding PPP1CC stretches follow at residues 12–17 (KGILKD) and 43–55 (KSQKWDEMNILAT). Positions 17–26 (DNTSTTSSMV) are enriched in polar residues. A compositionally biased stretch (basic and acidic residues) spans 30–44 (EHPRGSVHEQLSKKS). Residue Thr73 is modified to Phosphothreonine; by GSK3. 2 stretches are compositionally biased toward acidic residues: residues 80–91 (GDDEDACSDTET) and 121–130 (SSGEEDSDLS). The residue at position 87 (Ser87) is a Phosphoserine; by CK2. Over residues 131-144 (PEEREKKRQFEMRR) the composition is skewed to basic and acidic residues. Residues 147 to 150 (HYNE) are required for binding PPP1CC catalytic center, displacing metal ions and inhibition of PPP1CC catalytic activity. Positions 182–205 (SMNTEESNQGSTASDQQQNKSRSS) are enriched in polar residues.

It belongs to the protein phosphatase inhibitor 2 family.

Inhibitor of protein-phosphatase 1. The sequence is that of Putative protein phosphatase inhibitor 2-like protein 1 (PPP1R2P1) from Homo sapiens (Human).